The sequence spans 769 residues: Scarecrow-like protein 14 (769 aa).

4 disordered regions span residues 1–23 (MGSY…DFDL), 128–157 (PSSS…GAFS), 279–320 (TEKK…ERSN), and 364–388 (TAQS…DSKK). In terms of domain architecture, GRAS spans 384 to 765 (NDSKKETADL…RIVYASSLWV (382 aa)). The tract at residues 391 to 451 (ADLRTLLVLC…EARLAGTGTQ (61 aa)) is leucine repeat I (LRI). Residues 470–536 (YQTYMSVCPF…GGSPKLRITG (67 aa)) are VHIID. Residues 501-505 (IHIID) carry the VHIID motif. Positions 552-584 (ETGHRLARYCQRHNVPFEYNAIAQKWETIQVED) are leucine repeat II (LRII). The interval 593–687 (VVVNSLFRFR…KEFYGREIVN (95 aa)) is PFYRE. An SAW region spans residues 690–765 (ACEGTERVER…RIVYASSLWV (76 aa)).

This sequence belongs to the GRAS family. In terms of tissue distribution, expressed in roots, shoots, flowers and siliques.

The protein resides in the nucleus. In terms of biological role, probable transcription factor involved in plant development. This is Scarecrow-like protein 14 (SCL14) from Arabidopsis thaliana (Mouse-ear cress).